The following is a 285-amino-acid chain: Hypersensitive-induced reaction 1 protein (285 aa).

The N-myristoyl glycine moiety is linked to residue glycine 2. Residues 118–190 are a coiled coil; the sequence is FEQKNEIAKS…EKILQIKRAE (73 aa).

Homo- and heterodimer. Interacts with LRR1 (via LRR domain). Constitutively expressed in stems, roots and flowers, but not in leaves and fruits.

Positive regulator of hypersensitive response (HR)-like cell death. May be involved in potassium ion channel regulation. The chain is Hypersensitive-induced reaction 1 protein from Capsicum annuum (Capsicum pepper).